Consider the following 643-residue polypeptide: 1-deoxy-D-xylulose-5-phosphate synthase (643 aa).

Residues H78 and 119–121 (AHS) contribute to the thiamine diphosphate site. D150 lines the Mg(2+) pocket. Residues 151-152 (GA), N179, Y288, and E370 each bind thiamine diphosphate. N179 lines the Mg(2+) pocket.

It belongs to the transketolase family. DXPS subfamily. In terms of assembly, homodimer. Mg(2+) is required as a cofactor. It depends on thiamine diphosphate as a cofactor.

It carries out the reaction D-glyceraldehyde 3-phosphate + pyruvate + H(+) = 1-deoxy-D-xylulose 5-phosphate + CO2. The protein operates within metabolic intermediate biosynthesis; 1-deoxy-D-xylulose 5-phosphate biosynthesis; 1-deoxy-D-xylulose 5-phosphate from D-glyceraldehyde 3-phosphate and pyruvate: step 1/1. Catalyzes the acyloin condensation reaction between C atoms 2 and 3 of pyruvate and glyceraldehyde 3-phosphate to yield 1-deoxy-D-xylulose-5-phosphate (DXP). The protein is 1-deoxy-D-xylulose-5-phosphate synthase of Xanthobacter autotrophicus (strain ATCC BAA-1158 / Py2).